A 579-amino-acid polypeptide reads, in one-letter code: Type II restriction enzyme FokI (579 aa).

Residues Asp450, Asp467, and Lys469 contribute to the active site.

In terms of assembly, monomer, in which form it can cleave DNA. Homodimer when bound to DNA. It depends on Mg(2+) as a cofactor.

The enzyme catalyses Endonucleolytic cleavage of DNA to give specific double-stranded fragments with terminal 5'-phosphates.. Functionally, an S subtype restriction enzyme that recognizes the asymmetric double-stranded sequence 5'-GGATG-3' and cleaves respectively 14 bases after G-1 (top strand) and 13 bases before C-1 (bottom strand). This chain is Type II restriction enzyme FokI, found in Planomicrobium okeanokoites (Planococcus okeanokoites).